Consider the following 497-residue polypeptide: Glycerol kinase (497 aa).

ADP is bound at residue T11. The ATP site is built by T11, S12, and S13. A sn-glycerol 3-phosphate-binding site is contributed by T11. R15 serves as a coordination point for ADP. Sn-glycerol 3-phosphate contacts are provided by R81, E82, Y133, and D242. 5 residues coordinate glycerol: R81, E82, Y133, D242, and Q243. ADP contacts are provided by T264 and G307. ATP is bound by residues T264, G307, Q311, and G412. Positions 412 and 416 each coordinate ADP.

It belongs to the FGGY kinase family.

The enzyme catalyses glycerol + ATP = sn-glycerol 3-phosphate + ADP + H(+). Its pathway is polyol metabolism; glycerol degradation via glycerol kinase pathway; sn-glycerol 3-phosphate from glycerol: step 1/1. Its activity is regulated as follows. Inhibited by fructose 1,6-bisphosphate (FBP). In terms of biological role, key enzyme in the regulation of glycerol uptake and metabolism. Catalyzes the phosphorylation of glycerol to yield sn-glycerol 3-phosphate. The sequence is that of Glycerol kinase from Polaromonas sp. (strain JS666 / ATCC BAA-500).